The sequence spans 86 residues: Precursor of CEP4 (86 aa).

The signal sequence occupies residues 1-30; that stretch reads MVSRGCSITVLFRFLIVLLVIQVHFENTKA. A propeptide spanning residues 31-64 is cleaved from the precursor; it reads ARHAPVVSWSPPEPPKDDFVWYHKINRFKNIEQD. The disordered stretch occupies residues 63–86; sequence QDAFRPTHQGPSQGIGHKNPPGAP. Proline 68 and proline 73 each carry hydroxyproline. A propeptide spanning residues 80–86 is cleaved from the precursor; sequence KNPPGAP.

The protein belongs to the C-terminally encoded plant signaling peptide (CEP) family. As to quaternary structure, interacts with CEP receptors (e.g. CEPR1 and CEPR2). In terms of processing, the mature small signaling peptide is generated by proteolytic processing of the longer precursor. In terms of tissue distribution, expressed at low levels in flowers. Present in lateral roots, shoot apical meristem (SAM), flowers and siliques.

Its subcellular location is the secreted. The protein localises to the extracellular space. It localises to the apoplast. Its function is as follows. Extracellular signaling peptide that represses primary root growth rate. Promotes shoot growth and modulates leaf morphology. Regulates systemic nitrogen (N)-demand signaling. Mediates up-regulation of genes involved in N uptake and assimilation pathways. The protein is Precursor of CEP4 of Arabidopsis thaliana (Mouse-ear cress).